The sequence spans 535 residues: MLRLLLLWLWGPLGALAQGAPAGTAPTDDVVDLEFYTKRPLRSVSPSFLSITIDASLATDPRFLTFLGSPRLRALARGLSPAYLRFGGTKTDFLIFDPDKEPTSEERSYWKSQVNHDICRSEPVSAAVLRKLQVEWPFQELLLLREQYQKEFKNSTYSRSSVDMLYSFAKCSGLDLIFGLNALLRTPDLRWNSSNAQLLLDYCSSKGYNISWELGNEPNSFWKKAHILIDGLQLGEDFVELHKLLQRSAFQNAKLYGPDIGQPRGKTVKLLRSFLKAGGEVIDSLTWHHYYLNGRIATKEDFLSSDVLDTFILSVQKILKVTKEITPGKKVWLGETSSAYGGGAPLLSNTFAAGFMWLDKLGLSAQMGIEVVMRQVFFGAGNYHLVDENFEPLPDYWLSLLFKKLVGPRVLLSRVKGPDRSKLRVYLHCTNVYHPRYQEGDLTLYVLNLHNVTKHLKVPPPLFRKPVDTYLLKPSGPDGLLSKSVQLNGQILKMVDEQTLPALTEKPLPAGSALSLPAFSYGFFVIRNAKIAACI.

The first 27 residues, 1–27, serve as a signal peptide directing secretion; it reads MLRLLLLWLWGPLGALAQGAPAGTAPT. Residues 54–56 and threonine 89 each bind heparan sulfate group; that span reads DAS. The propeptide at 102–149 is linker peptide; that stretch reads PTSEERSYWKSQVNHDICRSEPVSAAVLRKLQVEWPFQELLLLREQYQ. Residues cysteine 119 and cysteine 171 are joined by a disulfide bond. Residue 150–154 participates in heparan sulfate group binding; that stretch reads KEFKN. N-linked (GlcNAc...) asparagine glycans are attached at residues asparagine 192 and asparagine 209. The Proton donor role is filled by glutamate 217. Heparan sulfate group is bound by residues 262–272, histidine 288, and arginine 295; that span reads QPRGKTVKLLR. Residues 280–409 form a required for heterodimerization with the heparanase 8 kDa subunit region; that stretch reads EVIDSLTWHH…LLFKKLVGPR (130 aa). Glutamate 335 functions as the Nucleophile in the catalytic mechanism. Heparan sulfate group contacts are provided by residues 340 to 342 and 381 to 383; these read YGG and GNY. An intrachain disulfide couples cysteine 429 to cysteine 534. Residue asparagine 451 is glycosylated (N-linked (GlcNAc...) asparagine). Residues 519 to 535 form a required for transferring proheparanase to the Golgi apparatus, secretion and subsequent enzyme activity and for enhancement of PKB/AKT1 phosphorylation region; sequence FSYGFFVIRNAKIAACI.

This sequence belongs to the glycosyl hydrolase 79 family. Heterodimer; heterodimer formation between the 8 kDa and the 50 kDa subunits is required for enzyme activity. Interacts with TF; the interaction, inhibited by heparin, enhances the generation of activated factor X and activates coagulation. Interacts with HRG; the interaction is enhanced at acidic pH, partially inhibits binding of HPSE to cell surface receptors and modulates its enzymatic activity. Interacts with SDC1; the interaction enhances the shedding of SDC1. Interacts with HPSE2. Post-translationally, proteolytically processed. The cleavage of the 65 kDa form leads to the generation of a linker peptide, and the 8 kDa and 50 kDa products. The active form, the 8/50 kDa heterodimer, is resistant to degradation. Complete removal of the linker peptide appears to be a prerequisite to the complete activation of the enzyme. N-glycosylated. Glycosylation of the 50 kDa subunit appears to be essential for its solubility. Expressed in skin, mainly in the stratum granulosum and the first layer of the stratum corneum in the upper part of the epidermis. Also detected in hair follicles and in sebaceous glands.

It is found in the lysosome membrane. The protein resides in the secreted. The protein localises to the nucleus. It carries out the reaction endohydrolysis of (1-&gt;4)-beta-D-glycosidic bonds of heparan sulfate chains in heparan sulfate proteoglycan.. With respect to regulation, inhibited by EDTA and activated by calcium and magnesium. Inhibited by laminarin sulfate and, to a lower extent, by heparin and sulfamin. Endoglycosidase that cleaves heparan sulfate proteoglycans (HSPGs) into heparan sulfate side chains and core proteoglycans. Participates in extracellular matrix (ECM) degradation and remodeling. Selectively cleaves the linkage between a glucuronic acid unit and an N-sulfo glucosamine unit carrying either a 3-O-sulfo or a 6-O-sulfo group. Can also cleave the linkage between a glucuronic acid unit and an N-sulfo glucosamine unit carrying a 2-O-sulfo group, but not linkages between a glucuronic acid unit and a 2-O-sulfated iduronic acid moiety. It is essentially inactive at neutral pH but becomes active under acidic conditions such as during tumor invasion and in inflammatory processes. Facilitates cell migration associated with metastasis, wound healing and inflammation. Enhances shedding of syndecans, and increases endothelial invasion and angiogenesis in myelomas. Acts as a procoagulant by increasing the generation of activation factor X in the presence of tissue factor and activation factor VII. Increases cell adhesion to the extracellular matrix (ECM), independent of its enzymatic activity. Induces AKT1/PKB phosphorylation via lipid rafts increasing cell mobility and invasion. Heparin increases this AKT1/PKB activation. Regulates osteogenesis. Enhances angiogenesis through up-regulation of SRC-mediated activation of VEGF. Implicated in hair follicle inner root sheath differentiation and hair homeostasis. The protein is Heparanase (Hpse) of Mus musculus (Mouse).